Reading from the N-terminus, the 785-residue chain is Endonuclease MutS2 (785 aa).

ATP is bound at residue 335 to 342 (GPNTGGKT). The Smr domain occupies 710 to 785 (LDLRGERYEE…GLGNTVVELR (76 aa)). Positions 764 to 785 (VKSARDGGANEGGLGNTVVELR) are disordered.

The protein belongs to the DNA mismatch repair MutS family. MutS2 subfamily. As to quaternary structure, homodimer. Binds to stalled ribosomes, contacting rRNA.

Functionally, endonuclease that is involved in the suppression of homologous recombination and thus may have a key role in the control of bacterial genetic diversity. Acts as a ribosome collision sensor, splitting the ribosome into its 2 subunits. Detects stalled/collided 70S ribosomes which it binds and splits by an ATP-hydrolysis driven conformational change. Acts upstream of the ribosome quality control system (RQC), a ribosome-associated complex that mediates the extraction of incompletely synthesized nascent chains from stalled ribosomes and their subsequent degradation. Probably generates substrates for RQC. The chain is Endonuclease MutS2 from Halalkalibacterium halodurans (strain ATCC BAA-125 / DSM 18197 / FERM 7344 / JCM 9153 / C-125) (Bacillus halodurans).